A 278-amino-acid chain; its full sequence is Formamidopyrimidine-DNA glycosylase (278 aa).

Pro-2 acts as the Schiff-base intermediate with DNA in catalysis. Residue Glu-3 is the Proton donor of the active site. Lys-59 acts as the Proton donor; for beta-elimination activity in catalysis. DNA-binding residues include His-94, Arg-113, and Lys-154. The FPG-type zinc-finger motif lies at 239–273; sequence KVHTKKGEFCIKCSSKIEKIKFKGRGTYFCPTCQK. Arg-263 acts as the Proton donor; for delta-elimination activity in catalysis.

The protein belongs to the FPG family. In terms of assembly, monomer. Zn(2+) is required as a cofactor.

The catalysed reaction is Hydrolysis of DNA containing ring-opened 7-methylguanine residues, releasing 2,6-diamino-4-hydroxy-5-(N-methyl)formamidopyrimidine.. It carries out the reaction 2'-deoxyribonucleotide-(2'-deoxyribose 5'-phosphate)-2'-deoxyribonucleotide-DNA = a 3'-end 2'-deoxyribonucleotide-(2,3-dehydro-2,3-deoxyribose 5'-phosphate)-DNA + a 5'-end 5'-phospho-2'-deoxyribonucleoside-DNA + H(+). Functionally, involved in base excision repair of DNA damaged by oxidation or by mutagenic agents. Acts as a DNA glycosylase that recognizes and removes damaged bases. Has a preference for oxidized purines, such as 7,8-dihydro-8-oxoguanine (8-oxoG). Has AP (apurinic/apyrimidinic) lyase activity and introduces nicks in the DNA strand. Cleaves the DNA backbone by beta-delta elimination to generate a single-strand break at the site of the removed base with both 3'- and 5'-phosphates. The polypeptide is Formamidopyrimidine-DNA glycosylase (mutM) (Mycoplasmopsis pulmonis (strain UAB CTIP) (Mycoplasma pulmonis)).